A 339-amino-acid polypeptide reads, in one-letter code: Dihydroorotate dehydrogenase (quinone) (339 aa).

FMN-binding positions include 62 to 66 (AGMDK) and threonine 86. Lysine 66 provides a ligand contact to substrate. Residue 111-115 (NRMGF) participates in substrate binding. FMN is bound by residues asparagine 139 and asparagine 172. Residue asparagine 172 participates in substrate binding. The Nucleophile role is filled by serine 175. Position 177 (asparagine 177) interacts with substrate. Residues lysine 217 and threonine 245 each contribute to the FMN site. A substrate-binding site is contributed by 246 to 247 (NT). FMN contacts are provided by residues glycine 268, glycine 297, and 318–319 (YS).

The protein belongs to the dihydroorotate dehydrogenase family. Type 2 subfamily. In terms of assembly, monomer. FMN serves as cofactor.

Its subcellular location is the cell membrane. It catalyses the reaction (S)-dihydroorotate + a quinone = orotate + a quinol. Its pathway is pyrimidine metabolism; UMP biosynthesis via de novo pathway; orotate from (S)-dihydroorotate (quinone route): step 1/1. Its function is as follows. Catalyzes the conversion of dihydroorotate to orotate with quinone as electron acceptor. The polypeptide is Dihydroorotate dehydrogenase (quinone) (Shewanella piezotolerans (strain WP3 / JCM 13877)).